Here is a 1187-residue protein sequence, read N- to C-terminus: Disease resistance protein TAO1 (1187 aa).

The region spanning 38–202 is the TIR domain; the sequence is WLHPVFLSFR…KISKDVSDVL (165 aa). The active site involves Glu-113. One can recognise an NB-ARC domain in the interval 217–478; the sequence is EAHTTEITSL…FFRRERIETL (262 aa). LRR repeat units follow at residues 498 to 522, 611 to 633, 635 to 658, 660 to 679, 680 to 703, 704 to 727, 728 to 750, 752 to 775, 799 to 823, 824 to 849, 870 to 894, 895 to 918, 920 to 942, and 953 to 974; these read DKSL…GLDI, SRKL…KFNP, FLVK…PIRN, KWMD…FSTA, TNLQ…IGNA, TNLL…IGNL, TNLK…SFGN, TSLK…IGNI, NTNL…MLNL, TRLE…VINL, ATNL…IWNI, TNLQ…VENA, NLQS…IWRI, and CSSL…LILD.

The catalysed reaction is NAD(+) + H2O = ADP-D-ribose + nicotinamide + H(+). Functionally, TIR-NB-LRR receptor-like protein that contributes to disease resistance induced by the Pseudomonas syringae type III effector AvrB. Acts additively with RPM1 to generate a full disease resistance response to P.syringae expressing this type III effector. This is Disease resistance protein TAO1 from Arabidopsis thaliana (Mouse-ear cress).